A 229-amino-acid chain; its full sequence is C-&gt;U-editing enzyme APOBEC-1 (229 aa).

The CMP/dCMP-type deaminase domain maps to 10-134 (VDPTLRRRIE…PRNRQGLRDL (125 aa)). H61 contributes to the Zn(2+) binding site. E63 (proton donor) is an active-site residue. 2 residues coordinate Zn(2+): C93 and C96.

This sequence belongs to the cytidine and deoxycytidylate deaminase family. In terms of assembly, homodimer. Interacts with A1CF; form an mRNA editing complex. Interacts with RBM47; form an mRNA editing complex. Found in a complex with CELF2/CUGBP2 and A1CF. Interacts with HNRPAB. Interacts with SYNCRIP. Requires Zn(2+) as cofactor. Expressed in the liver as well as small intestine.

The protein resides in the cytoplasm. The protein localises to the nucleus. It carries out the reaction a cytidine in mRNA + H2O + H(+) = a uridine in mRNA + NH4(+). The enzyme catalyses cytidine(6666) in apoB mRNA + H2O + H(+) = uridine(6666) in apoB mRNA + NH4(+). Functionally, cytidine deaminase catalyzing the cytidine to uridine postranscriptional editing of a variety of mRNAs. Form complexes with cofactors that confer differential editing activity and selectivity. Responsible for the postranscriptional editing of a CAA codon for Gln to a UAA codon for stop in the apolipoprotein B mRNA. Also involved in CGA (Arg) to UGA (Stop) editing in the NF1 mRNA. May also play a role in the epigenetic regulation of gene expression by participating in DNA demethylation. The chain is C-&gt;U-editing enzyme APOBEC-1 from Rattus norvegicus (Rat).